A 429-amino-acid chain; its full sequence is Dual-specificity RNA methyltransferase RlmN (429 aa).

The segment at 1–23 (MRAMQTHTEIAPMPIPGHVDPVP) is disordered. Glu-128 functions as the Proton acceptor in the catalytic mechanism. The Radical SAM core domain maps to 134 to 397 (DADRGTLCVS…APVRTPRGRD (264 aa)). Cysteines 141 and 402 form a disulfide. Positions 148, 152, and 155 each coordinate [4Fe-4S] cluster. Residues 226–227 (GE), Ser-258, 280–282 (SLH), and Asn-359 each bind S-adenosyl-L-methionine. The active-site S-methylcysteine intermediate is the Cys-402.

The protein belongs to the radical SAM superfamily. RlmN family. [4Fe-4S] cluster is required as a cofactor.

The protein resides in the cytoplasm. The enzyme catalyses adenosine(2503) in 23S rRNA + 2 reduced [2Fe-2S]-[ferredoxin] + 2 S-adenosyl-L-methionine = 2-methyladenosine(2503) in 23S rRNA + 5'-deoxyadenosine + L-methionine + 2 oxidized [2Fe-2S]-[ferredoxin] + S-adenosyl-L-homocysteine. The catalysed reaction is adenosine(37) in tRNA + 2 reduced [2Fe-2S]-[ferredoxin] + 2 S-adenosyl-L-methionine = 2-methyladenosine(37) in tRNA + 5'-deoxyadenosine + L-methionine + 2 oxidized [2Fe-2S]-[ferredoxin] + S-adenosyl-L-homocysteine. Specifically methylates position 2 of adenine 2503 in 23S rRNA and position 2 of adenine 37 in tRNAs. m2A2503 modification seems to play a crucial role in the proofreading step occurring at the peptidyl transferase center and thus would serve to optimize ribosomal fidelity. This Novosphingobium aromaticivorans (strain ATCC 700278 / DSM 12444 / CCUG 56034 / CIP 105152 / NBRC 16084 / F199) protein is Dual-specificity RNA methyltransferase RlmN.